The primary structure comprises 371 residues: Bifunctional enzyme IspD/IspF (371 aa).

Positions 1–210 are 2-C-methyl-D-erythritol 4-phosphate cytidylyltransferase; it reads MSEISLIMLA…LDLPTPSFEI (210 aa). A 2-C-methyl-D-erythritol 2,4-cyclodiphosphate synthase region spans residues 211 to 371; that stretch reads FTGNGFDVHE…NLKYFDWTRL (161 aa). Residues aspartate 217 and histidine 219 each coordinate a divalent metal cation. 4-CDP-2-C-methyl-D-erythritol 2-phosphate is bound by residues 217–219 and 243–244; these read DVH and HS. Histidine 251 contacts a divalent metal cation. Residues 265 to 267, 270 to 274, 341 to 344, phenylalanine 348, and arginine 351 each bind 4-CDP-2-C-methyl-D-erythritol 2-phosphate; these read DIG, YPDTD, and TTTE.

This sequence in the N-terminal section; belongs to the IspD/TarI cytidylyltransferase family. IspD subfamily. The protein in the C-terminal section; belongs to the IspF family. A divalent metal cation serves as cofactor.

The enzyme catalyses 2-C-methyl-D-erythritol 4-phosphate + CTP + H(+) = 4-CDP-2-C-methyl-D-erythritol + diphosphate. It carries out the reaction 4-CDP-2-C-methyl-D-erythritol 2-phosphate = 2-C-methyl-D-erythritol 2,4-cyclic diphosphate + CMP. Its pathway is isoprenoid biosynthesis; isopentenyl diphosphate biosynthesis via DXP pathway; isopentenyl diphosphate from 1-deoxy-D-xylulose 5-phosphate: step 2/6. It functions in the pathway isoprenoid biosynthesis; isopentenyl diphosphate biosynthesis via DXP pathway; isopentenyl diphosphate from 1-deoxy-D-xylulose 5-phosphate: step 4/6. In terms of biological role, bifunctional enzyme that catalyzes the formation of 4-diphosphocytidyl-2-C-methyl-D-erythritol from CTP and 2-C-methyl-D-erythritol 4-phosphate (MEP) (IspD), and catalyzes the conversion of 4-diphosphocytidyl-2-C-methyl-D-erythritol 2-phosphate (CDP-ME2P) to 2-C-methyl-D-erythritol 2,4-cyclodiphosphate (ME-CPP) with a corresponding release of cytidine 5-monophosphate (CMP) (IspF). The protein is Bifunctional enzyme IspD/IspF of Campylobacter jejuni subsp. jejuni serotype O:23/36 (strain 81-176).